Consider the following 137-residue polypeptide: Flagellar basal body rod protein FlgB (137 aa).

Belongs to the flagella basal body rod proteins family. As to quaternary structure, the basal body constitutes a major portion of the flagellar organelle and consists of a number of rings mounted on a central rod. In Gram-negative bacteria, at least four rings, L, P, S and M are present, whereas Gram-positive bacteria lack the L and P rings. The rod consists of about 26 subunits of FlgG in the distal portion, and FlgB, FlgC and FlgF build up the proximal portion of the rod with about 6 subunits each. Rod assembly occurs by export via the flagellum-specific pathway of its constituent proteins and by their incorporation into the rod structure in the probable order of FlgB, FlgC, FlgF and FlgG. Another protein, FliE, also assembles onto the stable rod structure.

The protein localises to the bacterial flagellum basal body. Its function is as follows. Structural component of flagellum, the bacterial motility apparatus. Part of the rod structure of flagellar basal body. The chain is Flagellar basal body rod protein FlgB from Yersinia ruckeri.